A 215-amino-acid chain; its full sequence is Pyrrolidone-carboxylate peptidase (215 aa).

Residues Glu80, Cys143, and His167 contribute to the active site.

It belongs to the peptidase C15 family. In terms of assembly, homotetramer.

It localises to the cytoplasm. The enzyme catalyses Release of an N-terminal pyroglutamyl group from a polypeptide, the second amino acid generally not being Pro.. Functionally, removes 5-oxoproline from various penultimate amino acid residues except L-proline. The sequence is that of Pyrrolidone-carboxylate peptidase from Brevibacillus brevis (strain 47 / JCM 6285 / NBRC 100599).